Reading from the N-terminus, the 326-residue chain is Beta-ketoacyl-[acyl-carrier-protein] synthase III (326 aa).

Residues Cys-120 and His-253 contribute to the active site. Positions 254 to 258 (QANIR) are ACP-binding. Asn-283 is a catalytic residue.

The protein belongs to the thiolase-like superfamily. FabH family. As to quaternary structure, homodimer.

It localises to the cytoplasm. The enzyme catalyses malonyl-[ACP] + acetyl-CoA + H(+) = 3-oxobutanoyl-[ACP] + CO2 + CoA. The protein operates within lipid metabolism; fatty acid biosynthesis. In terms of biological role, catalyzes the condensation reaction of fatty acid synthesis by the addition to an acyl acceptor of two carbons from malonyl-ACP. Catalyzes the first condensation reaction which initiates fatty acid synthesis and may therefore play a role in governing the total rate of fatty acid production. Possesses both acetoacetyl-ACP synthase and acetyl transacylase activities. Its substrate specificity determines the biosynthesis of branched-chain and/or straight-chain of fatty acids. In Cupriavidus necator (strain ATCC 17699 / DSM 428 / KCTC 22496 / NCIMB 10442 / H16 / Stanier 337) (Ralstonia eutropha), this protein is Beta-ketoacyl-[acyl-carrier-protein] synthase III.